The primary structure comprises 690 residues: Elongation factor G (690 aa).

Residues Glu8 to Ile283 enclose the tr-type G domain. Residues Ala17–Thr24, Asp81–His85, and Asn135–Asp138 contribute to the GTP site.

Belongs to the TRAFAC class translation factor GTPase superfamily. Classic translation factor GTPase family. EF-G/EF-2 subfamily.

Its subcellular location is the cytoplasm. Catalyzes the GTP-dependent ribosomal translocation step during translation elongation. During this step, the ribosome changes from the pre-translocational (PRE) to the post-translocational (POST) state as the newly formed A-site-bound peptidyl-tRNA and P-site-bound deacylated tRNA move to the P and E sites, respectively. Catalyzes the coordinated movement of the two tRNA molecules, the mRNA and conformational changes in the ribosome. The sequence is that of Elongation factor G from Rickettsia canadensis (strain McKiel).